The sequence spans 431 residues: Reticulon-like protein B17 (431 aa).

Disordered regions lie at residues 1-110 (MEST…SEAV) and 126-152 (PPRKRKTNGRPKKDKQSSAPPLCSSSD). Residues 12-26 (TKSASRLQDSSNPPN) show a composition bias toward polar residues. Over residues 126 to 138 (PPRKRKTNGRPKK) the composition is skewed to basic residues. Over residues 142–152 (SSAPPLCSSSD) the composition is skewed to polar residues. The 188-residue stretch at 168-355 (ISDLVMWRDV…VTAFWNLTSI (188 aa)) folds into the Reticulon domain. 4 helical membrane passes run 177 to 197 (VAKSTLWFGFGCLSFLSSCFA), 202 to 222 (FSVFSAVSNLGLVLLCGSFLS), 286 to 306 (YGHLITLWRLSAFGFFLSFTI), and 349 to 369 (FWNLTSIRTRIFAVFIILVIF). Positions 382 to 415 (EVEPVENEQEEETLPQEEETVPQEEETVPQEEEQ) are enriched in acidic residues. Residues 382-422 (EVEPVENEQEEETLPQEEETVPQEEETVPQEEEQTQPSEER) form a disordered region.

The protein localises to the endoplasmic reticulum membrane. This Arabidopsis thaliana (Mouse-ear cress) protein is Reticulon-like protein B17 (RTNLB17).